Here is a 547-residue protein sequence, read N- to C-terminus: Chaperonin GroEL 1 (547 aa).

Residues 29–32, 86–90, G418, 482–484, and D498 contribute to the ATP site; these read TLGP, DGTTT, and NAA.

This sequence belongs to the chaperonin (HSP60) family. As to quaternary structure, forms a cylinder of 14 subunits composed of two heptameric rings stacked back-to-back. Interacts with the co-chaperonin GroES.

The protein localises to the cytoplasm. The enzyme catalyses ATP + H2O + a folded polypeptide = ADP + phosphate + an unfolded polypeptide.. Its function is as follows. Together with its co-chaperonin GroES, plays an essential role in assisting protein folding. The GroEL-GroES system forms a nano-cage that allows encapsulation of the non-native substrate proteins and provides a physical environment optimized to promote and accelerate protein folding. The sequence is that of Chaperonin GroEL 1 from Corynebacterium jeikeium (strain K411).